Reading from the N-terminus, the 169-residue chain is uncharacterized protein (169 aa).

This is an uncharacterized protein from Saimiriine herpesvirus 2 (strain 11) (SaHV-2).